The chain runs to 383 residues: ATP phosphoribosyltransferase regulatory subunit (383 aa).

It belongs to the class-II aminoacyl-tRNA synthetase family. HisZ subfamily. As to quaternary structure, heteromultimer composed of HisG and HisZ subunits.

It is found in the cytoplasm. It participates in amino-acid biosynthesis; L-histidine biosynthesis; L-histidine from 5-phospho-alpha-D-ribose 1-diphosphate: step 1/9. Functionally, required for the first step of histidine biosynthesis. May allow the feedback regulation of ATP phosphoribosyltransferase activity by histidine. This chain is ATP phosphoribosyltransferase regulatory subunit, found in Chromobacterium violaceum (strain ATCC 12472 / DSM 30191 / JCM 1249 / CCUG 213 / NBRC 12614 / NCIMB 9131 / NCTC 9757 / MK).